Consider the following 202-residue polypeptide: ATP-dependent Clp protease proteolytic subunit (202 aa).

The Nucleophile role is filled by S101. H126 is a catalytic residue.

It belongs to the peptidase S14 family. Component of the chloroplastic Clp protease core complex.

The protein resides in the plastid. It localises to the chloroplast stroma. The enzyme catalyses Hydrolysis of proteins to small peptides in the presence of ATP and magnesium. alpha-casein is the usual test substrate. In the absence of ATP, only oligopeptides shorter than five residues are hydrolyzed (such as succinyl-Leu-Tyr-|-NHMec, and Leu-Tyr-Leu-|-Tyr-Trp, in which cleavage of the -Tyr-|-Leu- and -Tyr-|-Trp bonds also occurs).. Cleaves peptides in various proteins in a process that requires ATP hydrolysis. Has a chymotrypsin-like activity. Plays a major role in the degradation of misfolded proteins. The chain is ATP-dependent Clp protease proteolytic subunit from Platanus occidentalis (Sycamore).